Consider the following 352-residue polypeptide: Beta-methylmalyl-CoA dehydratase (352 aa).

Positions 16 to 129 constitute a MaoC-like domain; sequence LGQTIVHATP…GKTGVVYVHS (114 aa). Substrate-binding positions include 62 to 65, 85 to 88, and 96 to 98; these read PIDS, IANL, and GAV.

In terms of assembly, homodimer.

The catalysed reaction is (2R,3S)-beta-methylmalyl-CoA = 2-methylfumaryl-CoA + H2O. Its function is as follows. Involved in the glyoxylate assimilation cycle used to regenerate acetyl-CoA and produce pyruvate as universal precursor for biosynthesis. Catalyzes the reversible dehydration of beta-methylmalyl-CoA ((2R,3S)-beta-methylmalyl-CoA) to yield mesaconyl-CoA (2-methylfumaryl-CoA). The chain is Beta-methylmalyl-CoA dehydratase (mch) from Chloroflexus aurantiacus (strain ATCC 29366 / DSM 635 / J-10-fl).